We begin with the raw amino-acid sequence, 619 residues long: Chaperone protein HscA homolog (619 aa).

It belongs to the heat shock protein 70 family.

Functionally, chaperone involved in the maturation of iron-sulfur cluster-containing proteins. Has a low intrinsic ATPase activity which is markedly stimulated by HscB. The protein is Chaperone protein HscA homolog of Shewanella denitrificans (strain OS217 / ATCC BAA-1090 / DSM 15013).